Here is a 199-residue protein sequence, read N- to C-terminus: Chaperone protein TorD (199 aa).

The protein belongs to the TorD/DmsD family. TorD subfamily.

The protein localises to the cytoplasm. Functionally, involved in the biogenesis of TorA. Acts on TorA before the insertion of the molybdenum cofactor and, as a result, probably favors a conformation of the apoenzyme that is competent for acquiring the cofactor. This Escherichia coli O7:K1 (strain IAI39 / ExPEC) protein is Chaperone protein TorD.